The following is a 355-amino-acid chain: Peptide chain release factor 1 (355 aa).

Gln233 carries the N5-methylglutamine modification. Residues 280 to 293 (ERRKKEQERADSRR) show a composition bias toward basic and acidic residues. A disordered region spans residues 280–306 (ERRKKEQERADSRRGQVGSGNRSERIR).

The protein belongs to the prokaryotic/mitochondrial release factor family. Methylated by PrmC. Methylation increases the termination efficiency of RF1.

It is found in the cytoplasm. Peptide chain release factor 1 directs the termination of translation in response to the peptide chain termination codons UAG and UAA. The sequence is that of Peptide chain release factor 1 from Rickettsia africae (strain ESF-5).